The chain runs to 340 residues: Anthranilate phosphoribosyltransferase (340 aa).

5-phospho-alpha-D-ribose 1-diphosphate-binding positions include Gly81, 84–85, Thr89, 91–94, 109–117, and Ser121; these read GD, NIST, and KHGNRGATS. Residue Gly81 coordinates anthranilate. Ser93 lines the Mg(2+) pocket. Asn112 provides a ligand contact to anthranilate. Arg167 serves as a coordination point for anthranilate. Residues Asp225 and Glu226 each coordinate Mg(2+).

The protein belongs to the anthranilate phosphoribosyltransferase family. Homodimer. Mg(2+) serves as cofactor.

The catalysed reaction is N-(5-phospho-beta-D-ribosyl)anthranilate + diphosphate = 5-phospho-alpha-D-ribose 1-diphosphate + anthranilate. The protein operates within amino-acid biosynthesis; L-tryptophan biosynthesis; L-tryptophan from chorismate: step 2/5. In terms of biological role, catalyzes the transfer of the phosphoribosyl group of 5-phosphorylribose-1-pyrophosphate (PRPP) to anthranilate to yield N-(5'-phosphoribosyl)-anthranilate (PRA). The protein is Anthranilate phosphoribosyltransferase of Methanocorpusculum labreanum (strain ATCC 43576 / DSM 4855 / Z).